Consider the following 356-residue polypeptide: uncharacterized protein (356 aa).

The protein belongs to the NAD(P)-dependent epimerase/dehydratase family. NAD(+) serves as cofactor. The cofactor is NADP(+).

In terms of biological role, putative nucleotide sugar epimerase/dehydrogenase. This is an uncharacterized protein from Sinorhizobium fredii (strain NBRC 101917 / NGR234).